A 723-amino-acid chain; its full sequence is Threonine--tRNA ligase 1, cytoplasmic (723 aa).

The interval 1 to 46 is disordered; it reads MFEEKASSPSGKMGGEEKPIGAGEEKQKEGGKKKNKEGSGDGGRAE. The segment covering 14 to 39 has biased composition (basic and acidic residues); that stretch reads GGEEKPIGAGEEKQKEGGKKKNKEGS. Ser39 is subject to Phosphoserine. The TGS domain occupies 79–143; that stretch reads DSKPIKVTLP…EEDCTLELLK (65 aa). Lys243 bears the N6-acetyllysine mark. Thr246 bears the Phosphothreonine mark. The residue at position 298 (Tyr298) is a Phosphotyrosine. Thr453 is subject to Phosphothreonine. Residue Ser702 is modified to Phosphoserine.

This sequence belongs to the class-II aminoacyl-tRNA synthetase family. Homodimer. In terms of processing, ISGylated.

The protein resides in the cytoplasm. It carries out the reaction tRNA(Thr) + L-threonine + ATP = L-threonyl-tRNA(Thr) + AMP + diphosphate + H(+). With respect to regulation, inhibited by borrelidin (BN, IC 50 is 7 nM), which binds to 4 distinct subsites in the protein, preventing binding of all 3 substrates. Functionally, catalyzes the attachment of threonine to tRNA(Thr) in a two-step reaction: threonine is first activated by ATP to form Thr-AMP and then transferred to the acceptor end of tRNA(Thr). Also edits incorrectly charged tRNA(Thr) via its editing domain, at the post-transfer stage. The chain is Threonine--tRNA ligase 1, cytoplasmic from Homo sapiens (Human).